The chain runs to 236 residues: MKLNISYPVNGTQKTIEVDDEHRVRVFYDKRIGQEVNGEAVGDEFKGYVFKIAGGNDKQGFPMKQGVLLPTRVKLLMAKGTSCYRPRRNGERKRKSVRGAIVGPDLAVLALIITKKGDQEIEGITNESVPKRLGPKRANNIRKFFGLTKDDDVRDFVIRREVVKGDKTYTKAPKIQRLVTPQRLQRKRHQRALKVRNAQAQREAAAEYAQLLAKRLTEKKAEKAEERKRRASSLKA.

Phosphoserine is present on residues S232 and S233.

Belongs to the eukaryotic ribosomal protein eS6 family. In terms of processing, phosphorylated.

This chain is Small ribosomal subunit protein eS6 (RPS6), found in Eremothecium gossypii (strain ATCC 10895 / CBS 109.51 / FGSC 9923 / NRRL Y-1056) (Yeast).